A 230-amino-acid chain; its full sequence is Flagellar L-ring protein (230 aa).

A signal peptide spans Met1 to Ser16. The N-palmitoyl cysteine moiety is linked to residue Cys17. Cys17 is lipidated: S-diacylglycerol cysteine.

It belongs to the FlgH family. As to quaternary structure, the basal body constitutes a major portion of the flagellar organelle and consists of four rings (L,P,S, and M) mounted on a central rod.

It is found in the cell outer membrane. It localises to the bacterial flagellum basal body. Assembles around the rod to form the L-ring and probably protects the motor/basal body from shearing forces during rotation. This is Flagellar L-ring protein from Bartonella bacilliformis (strain ATCC 35685 / KC583 / Herrer 020/F12,63).